Here is a 567-residue protein sequence, read N- to C-terminus: Signal transducer and activator of transcription b (567 aa).

An SH2 domain is found at tryptophan 449–arginine 548.

Belongs to the transcription factor STAT family. In terms of assembly, may interact with sodium-dependent transporter snf-12; the interaction is probably direct.

The protein resides in the cytoplasm. Its subcellular location is the nucleus. It localises to the vesicle. Carries out a dual function: signal transduction and activation of transcription. Required, in concert with transcription factor elt-3, for up-regulation of the vacuolar H(+)-ATPase and acceleration of lysosome maturation at molt. As part of the innate immune response to molting and injury of the adult epidermis, positively regulates the expression of epidermal antimicrobial peptides, such as nlp-29. Through positively modulating the expression of epidermal antimicrobial peptides, such as nlp-29, plays a role in resistance to fungal infection and in the response to physical wounding and phorbol ester PMA treatment. Functions cell autonomously in the epidermis, in concert with sodium-dependent transporter snf-12, probably acting at vesicular membranes, downstream of a p38 MAPK/pmk-1 pathway. This Caenorhabditis elegans protein is Signal transducer and activator of transcription b.